The sequence spans 275 residues: 3-methyl-2-oxobutanoate hydroxymethyltransferase (275 aa).

Residues Asp44 and Asp83 each coordinate Mg(2+). Residues 44 to 45 (DS), Asp83, and Lys113 each bind 3-methyl-2-oxobutanoate. A Mg(2+)-binding site is contributed by Glu115. Glu182 (proton acceptor) is an active-site residue.

The protein belongs to the PanB family. As to quaternary structure, homodecamer; pentamer of dimers. Requires Mg(2+) as cofactor.

It is found in the cytoplasm. It carries out the reaction 3-methyl-2-oxobutanoate + (6R)-5,10-methylene-5,6,7,8-tetrahydrofolate + H2O = 2-dehydropantoate + (6S)-5,6,7,8-tetrahydrofolate. Its pathway is cofactor biosynthesis; (R)-pantothenate biosynthesis; (R)-pantoate from 3-methyl-2-oxobutanoate: step 1/2. Functionally, catalyzes the reversible reaction in which hydroxymethyl group from 5,10-methylenetetrahydrofolate is transferred onto alpha-ketoisovalerate to form ketopantoate. This chain is 3-methyl-2-oxobutanoate hydroxymethyltransferase, found in Clostridium botulinum (strain Alaska E43 / Type E3).